Reading from the N-terminus, the 80-residue chain is Cell division protein ZapB (80 aa).

The stretch at 3–80 (FEVLEKLEAK…ALLGKMEDVE (78 aa)) forms a coiled coil.

The protein belongs to the ZapB family. Homodimer. The ends of the coiled-coil dimer bind to each other, forming polymers. Interacts with FtsZ.

It is found in the cytoplasm. In terms of biological role, non-essential, abundant cell division factor that is required for proper Z-ring formation. It is recruited early to the divisome by direct interaction with FtsZ, stimulating Z-ring assembly and thereby promoting cell division earlier in the cell cycle. Its recruitment to the Z-ring requires functional FtsA or ZipA. This is Cell division protein ZapB from Vibrio vulnificus (strain CMCP6).